A 280-amino-acid polypeptide reads, in one-letter code: Hydroxyacylglutathione hydrolase, mitochondrial (280 aa).

Position 61 is an N6-acetyllysine (lysine 61). Zn(2+)-binding residues include histidine 74, histidine 76, aspartate 78, and histidine 79. An N6-acetyllysine modification is found at lysine 88. Residues histidine 130 and aspartate 154 each contribute to the Zn(2+) site. Residues 163–165 and 193–195 contribute to the substrate site; these read KFY and HEY. A Zn(2+)-binding site is contributed by histidine 193. Position 201 is an N6-acetyllysine; alternate (lysine 201). Lysine 201 bears the N6-succinyllysine; alternate mark. 269-272 lines the substrate pocket; it reads RREK.

This sequence belongs to the metallo-beta-lactamase superfamily. Glyoxalase II family. In terms of assembly, monomer. Zn(2+) is required as a cofactor. As to expression, testis.

The protein resides in the mitochondrion matrix. The protein localises to the cytoplasm. It carries out the reaction an S-(2-hydroxyacyl)glutathione + H2O = a 2-hydroxy carboxylate + glutathione + H(+). It catalyses the reaction (R)-S-lactoylglutathione + H2O = (R)-lactate + glutathione + H(+). It functions in the pathway secondary metabolite metabolism; methylglyoxal degradation; (R)-lactate from methylglyoxal: step 2/2. Its function is as follows. Thiolesterase that catalyzes the hydrolysis of S-D-lactoyl-glutathione to form glutathione and D-lactic acid. In Callithrix jacchus (White-tufted-ear marmoset), this protein is Hydroxyacylglutathione hydrolase, mitochondrial (HAGH).